The sequence spans 431 residues: Hydroxylamine reductase (431 aa).

4 residues coordinate [4Fe-4S] cluster: cysteine 5, cysteine 8, cysteine 17, and cysteine 23. Residues histidine 131, glutamate 155, cysteine 199, cysteine 286, cysteine 314, cysteine 339, glutamate 373, and lysine 375 each coordinate hybrid [4Fe-2O-2S] cluster. Position 286 is a cysteine persulfide (cysteine 286).

The protein belongs to the HCP family. The cofactor is [4Fe-4S] cluster. Hybrid [4Fe-2O-2S] cluster is required as a cofactor.

Its subcellular location is the cytoplasm. The enzyme catalyses A + NH4(+) + H2O = hydroxylamine + AH2 + H(+). Functionally, catalyzes the reduction of hydroxylamine to form NH(3) and H(2)O. The polypeptide is Hydroxylamine reductase (Thermotoga maritima (strain ATCC 43589 / DSM 3109 / JCM 10099 / NBRC 100826 / MSB8)).